Here is a 299-residue protein sequence, read N- to C-terminus: 4-diphosphocytidyl-2-C-methyl-D-erythritol kinase (299 aa).

K20 is a catalytic residue. ATP is bound at residue P106–S116. Residue D148 is part of the active site.

The protein belongs to the GHMP kinase family. IspE subfamily. In terms of assembly, homodimer.

The enzyme catalyses 4-CDP-2-C-methyl-D-erythritol + ATP = 4-CDP-2-C-methyl-D-erythritol 2-phosphate + ADP + H(+). It participates in isoprenoid biosynthesis; isopentenyl diphosphate biosynthesis via DXP pathway; isopentenyl diphosphate from 1-deoxy-D-xylulose 5-phosphate: step 3/6. Functionally, catalyzes the phosphorylation of the position 2 hydroxy group of 4-diphosphocytidyl-2C-methyl-D-erythritol. The polypeptide is 4-diphosphocytidyl-2-C-methyl-D-erythritol kinase (Yersinia pseudotuberculosis serotype O:1b (strain IP 31758)).